Reading from the N-terminus, the 372-residue chain is Actin-related protein 2/3 complex subunit 1B (372 aa).

WD repeat units lie at residues 6 to 45, 50 to 89, 94 to 135, 140 to 179, 242 to 280, and 324 to 367; these read FLVE…WTKV, EHNG…WKPT, RINR…WVCK, PIRS…VEER, SETL…GMLS, and LHKN…SALK.

It belongs to the WD repeat ARPC1 family. Component of the Arp2/3 complex composed of ACTR2/ARP2, ACTR3/ARP3, ARPC1B/p41-ARC, ARPC2/p34-ARC, ARPC3/p21-ARC, ARPC4/p20-ARC and ARPC5/p16-ARC.

The protein resides in the cytoplasm. The protein localises to the cytoskeleton. Its subcellular location is the nucleus. Its function is as follows. Component of the Arp2/3 complex, a multiprotein complex that mediates actin polymerization upon stimulation by nucleation-promoting factor (NPF). The Arp2/3 complex mediates the formation of branched actin networks in the cytoplasm, providing the force for cell motility. In addition to its role in the cytoplasmic cytoskeleton, the Arp2/3 complex also promotes actin polymerization in the nucleus, thereby regulating gene transcription and repair of damaged DNA. The Arp2/3 complex promotes homologous recombination (HR) repair in response to DNA damage by promoting nuclear actin polymerization, leading to drive motility of double-strand breaks (DSBs). The protein is Actin-related protein 2/3 complex subunit 1B of Homo sapiens (Human).